Reading from the N-terminus, the 139-residue chain is Aspartate 1-decarboxylase (139 aa).

S26 acts as the Schiff-base intermediate with substrate; via pyruvic acid in catalysis. At S26 the chain carries Pyruvic acid (Ser). T58 is a binding site for substrate. The Proton donor role is filled by Y59. 72-74 (GGA) lines the substrate pocket.

The protein belongs to the PanD family. As to quaternary structure, heterooctamer of four alpha and four beta subunits. The cofactor is pyruvate. Post-translationally, is synthesized initially as an inactive proenzyme, which is activated by self-cleavage at a specific serine bond to produce a beta-subunit with a hydroxyl group at its C-terminus and an alpha-subunit with a pyruvoyl group at its N-terminus.

Its subcellular location is the cytoplasm. It carries out the reaction L-aspartate + H(+) = beta-alanine + CO2. It functions in the pathway cofactor biosynthesis; (R)-pantothenate biosynthesis; beta-alanine from L-aspartate: step 1/1. Catalyzes the pyruvoyl-dependent decarboxylation of aspartate to produce beta-alanine. The chain is Aspartate 1-decarboxylase from Microcystis aeruginosa (strain NIES-843 / IAM M-2473).